A 321-amino-acid chain; its full sequence is Transaldolase (321 aa).

Lys132 (schiff-base intermediate with substrate) is an active-site residue.

The protein belongs to the transaldolase family. Type 1 subfamily. In terms of assembly, homodimer.

The protein localises to the cytoplasm. It carries out the reaction D-sedoheptulose 7-phosphate + D-glyceraldehyde 3-phosphate = D-erythrose 4-phosphate + beta-D-fructose 6-phosphate. It participates in carbohydrate degradation; pentose phosphate pathway; D-glyceraldehyde 3-phosphate and beta-D-fructose 6-phosphate from D-ribose 5-phosphate and D-xylulose 5-phosphate (non-oxidative stage): step 2/3. In terms of biological role, transaldolase is important for the balance of metabolites in the pentose-phosphate pathway. This chain is Transaldolase, found in Rhizobium rhizogenes (strain K84 / ATCC BAA-868) (Agrobacterium radiobacter).